A 411-amino-acid polypeptide reads, in one-letter code: Serpin A12 (411 aa).

An N-terminal signal peptide occupies residues 1–20 (MNLVLGLGLFLAGLLTVKGL). Residues asparagine 92 and asparagine 267 are each glycosylated (N-linked (GlcNAc...) asparagine). Residues 364–382 (GTEGAAGSGAQTLPMETPR) are reactive center loop.

This sequence belongs to the serpin family. In terms of assembly, forms a stable complex with KLK7. Post-translationally, glycosylation slightly decreases affinity for heparin, but otherwise has no significant effect on KLK7 inhibitory activity or thermal stability of the protein. In terms of tissue distribution, expressed in visceral adipose tissues.

The protein localises to the secreted. Its activity is regulated as follows. Inhibition of KLK7 is enhanced by heparin. Functionally, adipokine that modulates insulin action by specifically inhibiting its target protease KLK7 in white adipose tissues. This chain is Serpin A12 (Serpina12), found in Rattus norvegicus (Rat).